A 403-amino-acid chain; its full sequence is Probable eukaryotic initiation factor 4A (403 aa).

The tract at residues 1–29 (MSQQDRVAPQDQDSFLDDQPGVRPIPSFD) is disordered. Residues 26–54 (PSFDDMPLHQNLLRGIYSYGFEKPSSIQQ) carry the Q motif motif. Residues 57–230 (IAPFTRGGDI…KKFMRDPVRI (174 aa)) form the Helicase ATP-binding domain. Residue 70-77 (AQSGTGKT) participates in ATP binding. Positions 178–181 (DEAD) match the DEAD box motif. The region spanning 241 to 401 (GIKQFFIAVE…ELPVDFAAYL (161 aa)) is the Helicase C-terminal domain.

This sequence belongs to the DEAD box helicase family. eIF4A subfamily. EIF4F is a multi-subunit complex, the composition of which varies with external and internal environmental conditions. It is composed of at least EIF4A, EIF4E and EIF4G.

The catalysed reaction is ATP + H2O = ADP + phosphate + H(+). ATP-dependent RNA helicase which is a subunit of the eIF4F complex involved in cap recognition and is required for mRNA binding to ribosome. In the current model of translation initiation, eIF4A unwinds RNA secondary structures in the 5'-UTR of mRNAs which is necessary to allow efficient binding of the small ribosomal subunit, and subsequent scanning for the initiator codon. In Leishmania braziliensis, this protein is Probable eukaryotic initiation factor 4A.